Consider the following 1211-residue polypeptide: MSQLRPRDSSAGKSSSPRRTDRNPESIDVNSKGGSEGMTSGLVPGTAPHKEDETEAEDDIDCGRLITSKSLATMLTTASMYAGVSQLDDDAIESSALDEPIPYVPYEEDAESVMSESTVGVDTVRDTDSSEQINPEIDGLVALRKKQQHTLSKFELSVVRKRCSQLSLAGSSSGSTRRNSFTLDNNETTRAVKLCEKLKTTFDLSDDDEFVNDYPCWLLHEVFLQGHIYITSRYLLYFAFLPKRDSTVTMSGALSIRSSTTMRFSVRRWAVLKGNYFRLYANSTERYFPSLNIDLRFLLKVELSNPNLEENKPTVFKLITEARTHYFQADSLDNARSWVTDLRKHIFTAKNSGGHVTIKVPLENILDLSIETLFEASQTLKLKVLESEESYAIDDYYFMFFNNGDQVLDSIRQSMKALGIELTDSDSSESDSDVSGSETNGRSTHRKSKLSRSLSVLTPIPRGIGSIYKPIKSSASGIIGAIKKPQKSATRPFSSVVETVVPNDNDSELKQDHAGDAPKDSEEPSTKPSNWSAKSLVQGFLSTTSSISQSMLFASPMHYNNQLFIERGEEDPYFVTNKEEREVAQSRFRKHFSLPDSEELLASYFCHFQKNIPVYGKVYLGTTCICYRSLFPGTNTTMILPYSDIENVYNLKGFRFGYSGLVIVIRAHEELFFEFGSNESRDDCDLFLLKQLDFTKSHKNAHSEQKRKRNDSIKLAESVQLADARLRYFETRIESDIGREVPIILEENQYSTSEIRSKRRYKFVLLTIGSRGDVQPYISLAKGLLAENHKVKIVTHEEFKPWVESYGIEFATIAGNPAELMSLMVTHKSLSVGFLKEAKEKFTGWIGELLQSSWDACQDADVLIESPSAMAGIHIAEKLQIPYFRAFTMPWTRTRAYPHAFVVPEQKRGGSYNYLTHIIFENVFWKGISGEVNKWREQVLMLPKTNLERLEQNKVPFLYNVSPTVFPPSMDFPHWVKVVGYWFLDEGEADSYDPPKPLLEFMEKAKTDGKKLVYIGFGSIVVSDPKQLTEAVIDAVLSADVRCILNKGWSDRLGKQTGVEVELPEEIYNSGNVPHDWLFGKIDASVHHGGSGTTGATLRAGIPTIIKPFFGDQFFYANRVEDIGVGIGLRKLNSKSLSKAIKEVTTNTRIIEKAKEIGKQIQSENGVSAAIRCLYQEMEYAKKLSKSKQKYWDNQSEDISDDSVSGSWFEV.

Residues 1 to 10 (MSQLRPRDSS) show a composition bias toward basic and acidic residues. The interval 1 to 61 (MSQLRPRDSS…DETEAEDDID (61 aa)) is disordered. The GRAM 1 domain occupies 196 to 235 (EKLKTTFDLSDDDEFVNDYPCWLLHEVFLQGHIYITSRYL). Residues 248 to 347 (VTMSGALSIR…WVTDLRKHIF (100 aa)) enclose the PH domain. Disordered regions lie at residues 422–452 (LTDS…KLSR) and 500–531 (VVPN…PSNW). Acidic residues predominate over residues 423–432 (TDSDSSESDS). Basic and acidic residues predominate over residues 507-525 (SELKQDHAGDAPKDSEEPS). Residues 586 to 652 (SRFRKHFSLP…SDIENVYNLK (67 aa)) form the GRAM 2 domain. UDP-alpha-D-glucose contacts are provided by serine 770, arginine 771, aspartate 773, asparagine 1046, asparagine 1072, valine 1073, histidine 1075, histidine 1088, serine 1091, glycine 1092, threonine 1093, aspartate 1112, and glutamine 1113.

The protein belongs to the glycosyltransferase 28 family.

It localises to the cytoplasm. The protein resides in the preautophagosomal structure membrane. The enzyme catalyses a sterol + UDP-alpha-D-glucose = a sterol 3-beta-D-glucoside + UDP + H(+). It carries out the reaction ergosterol + UDP-alpha-D-glucose = ergosteryl 3-beta-D-glucoside + UDP + H(+). Its function is as follows. Sterol glycosyltransferase responsible for the glycosylation of ergosterol to form ergosterol-glucoside. Shows also activity in vitro on other sterols such as cholesterol, beta-sitosterol, stigmasterol and tomatidine. Probable sterol 3-beta-glucosyltransferase that mediates autophagic degradation of peroxisomes (pexophagy). The protein is Sterol 3-beta-glucosyltransferase of Komagataella phaffii (strain GS115 / ATCC 20864) (Yeast).